Here is a 418-residue protein sequence, read N- to C-terminus: MSEFLVNLLGERLVNGEKAEVDVQALGSRLSLLGLYFGCSLNGPCKQFNASLTEFYSKFKKSSEHKDKLEIVFISSDQDQKQWQDFLQEMQWPALPFKDRHKKMKLWNKYKVTSIPSLVFIDAATGKVVCRNGLLVVRDDPKGLEFPWGPKPFAEVVSGPLLRNNRQTTDSTALEGSYVGVYFSAHWCPPCRSLTRVLVESYRKVKETGQKFEIVFVSADRSEESFTQYFSEMPWLAVPYSDEARRSRLNRLYGIQGIPTLILLDTEGHMITRQGRVEILNDPDCGLFPWHPRPVLELSESNAVQLHEGPCLVLFVDAEEEGELDPAKELIQPIAEKIMAKYKAKEEETPLLFFVAGEDDMSDSLRDYTNLPEAAPLLTILDMSARAKYVKDVEEITPAVVEQFVSGFLAEKLKPEPI.

The Thioredoxin domain maps to 109-309 (KYKVTSIPSL…ESNAVQLHEG (201 aa)).

It belongs to the nucleoredoxin family.

The protein localises to the cytoplasm. Its subcellular location is the cytosol. The protein resides in the nucleus. The enzyme catalyses [protein]-dithiol + NAD(+) = [protein]-disulfide + NADH + H(+). The catalysed reaction is [protein]-dithiol + NADP(+) = [protein]-disulfide + NADPH + H(+). Its function is as follows. Functions as a redox-dependent negative regulator of the Wnt signaling pathway. The sequence is that of Nucleoredoxin (nxn) from Danio rerio (Zebrafish).